Consider the following 246-residue polypeptide: Probable ABC transporter permease protein BMEII0107 (246 aa).

6 helical membrane-spanning segments follow: residues 12-32 (LLSF…GAVV), 63-83 (VLSG…LMGW), 94-114 (WVQF…IVTL), 122-142 (IFVI…QGVI), 172-192 (VPFI…TVVA), and 211-231 (LYYD…LGLF). Residues 56–236 (IFASLRRVLS…ILGLFMDRLL (181 aa)) enclose the ABC transmembrane type-1 domain.

It belongs to the binding-protein-dependent transport system permease family. As to quaternary structure, the complex is composed of two ATP-binding proteins (BMEII0108), two transmembrane proteins (BMEII0107) and a solute-binding protein (BMEII0109).

It is found in the cell inner membrane. Probably part of an ABC transporter complex. Probably responsible for the translocation of the substrate across the membrane. This chain is Probable ABC transporter permease protein BMEII0107, found in Brucella melitensis biotype 1 (strain ATCC 23456 / CCUG 17765 / NCTC 10094 / 16M).